Consider the following 129-residue polypeptide: Cytochrome c oxidase subunit 5B, mitochondrial (129 aa).

A mitochondrion-targeting transit peptide spans 1–31 (MASRLLRGAGTLAAQALRARGPSGAAAMRSM). An N6-acetyllysine mark is found at Lys-68 and Lys-86. Zn(2+) is bound by residues Cys-91, Cys-93, Cys-113, and Cys-116. At Lys-121 the chain carries N6-acetyllysine.

It belongs to the cytochrome c oxidase subunit 5B family. Component of the cytochrome c oxidase (complex IV, CIV), a multisubunit enzyme composed of 14 subunits. The complex is composed of a catalytic core of 3 subunits MT-CO1, MT-CO2 and MT-CO3, encoded in the mitochondrial DNA, and 11 supernumerary subunits COX4I1 (or COX4I2), COX5A, COX5B, COX6A1 (or COX6A2), COX6B1 (or COX6B2), COX6C, COX7A2 (or COX7A1), COX7B, COX7C, COX8A and NDUFA4, which are encoded in the nuclear genome. The complex exists as a monomer or a dimer and forms supercomplexes (SCs) in the inner mitochondrial membrane with NADH-ubiquinone oxidoreductase (complex I, CI) and ubiquinol-cytochrome c oxidoreductase (cytochrome b-c1 complex, complex III, CIII), resulting in different assemblies (supercomplex SCI(1)III(2)IV(1) and megacomplex MCI(2)III(2)IV(2)).

The protein localises to the mitochondrion inner membrane. It participates in energy metabolism; oxidative phosphorylation. Its function is as follows. Component of the cytochrome c oxidase, the last enzyme in the mitochondrial electron transport chain which drives oxidative phosphorylation. The respiratory chain contains 3 multisubunit complexes succinate dehydrogenase (complex II, CII), ubiquinol-cytochrome c oxidoreductase (cytochrome b-c1 complex, complex III, CIII) and cytochrome c oxidase (complex IV, CIV), that cooperate to transfer electrons derived from NADH and succinate to molecular oxygen, creating an electrochemical gradient over the inner membrane that drives transmembrane transport and the ATP synthase. Cytochrome c oxidase is the component of the respiratory chain that catalyzes the reduction of oxygen to water. Electrons originating from reduced cytochrome c in the intermembrane space (IMS) are transferred via the dinuclear copper A center (CU(A)) of subunit 2 and heme A of subunit 1 to the active site in subunit 1, a binuclear center (BNC) formed by heme A3 and copper B (CU(B)). The BNC reduces molecular oxygen to 2 water molecules using 4 electrons from cytochrome c in the IMS and 4 protons from the mitochondrial matrix. This chain is Cytochrome c oxidase subunit 5B, mitochondrial (COX5B), found in Homo sapiens (Human).